A 145-amino-acid chain; its full sequence is D-aminoacyl-tRNA deacylase (145 aa).

The Gly-cisPro motif, important for rejection of L-amino acids motif lies at 137–138 (GP).

This sequence belongs to the DTD family. As to quaternary structure, homodimer.

It localises to the cytoplasm. It carries out the reaction glycyl-tRNA(Ala) + H2O = tRNA(Ala) + glycine + H(+). The catalysed reaction is a D-aminoacyl-tRNA + H2O = a tRNA + a D-alpha-amino acid + H(+). Its function is as follows. An aminoacyl-tRNA editing enzyme that deacylates mischarged D-aminoacyl-tRNAs. Also deacylates mischarged glycyl-tRNA(Ala), protecting cells against glycine mischarging by AlaRS. Acts via tRNA-based rather than protein-based catalysis; rejects L-amino acids rather than detecting D-amino acids in the active site. By recycling D-aminoacyl-tRNA to D-amino acids and free tRNA molecules, this enzyme counteracts the toxicity associated with the formation of D-aminoacyl-tRNA entities in vivo and helps enforce protein L-homochirality. This Stutzerimonas stutzeri (strain A1501) (Pseudomonas stutzeri) protein is D-aminoacyl-tRNA deacylase.